Reading from the N-terminus, the 411-residue chain is NADH-quinone oxidoreductase subunit D (411 aa).

This sequence belongs to the complex I 49 kDa subunit family. In terms of assembly, NDH-1 is composed of 14 different subunits. Subunits NuoB, C, D, E, F, and G constitute the peripheral sector of the complex.

It localises to the cell inner membrane. The catalysed reaction is a quinone + NADH + 5 H(+)(in) = a quinol + NAD(+) + 4 H(+)(out). Its function is as follows. NDH-1 shuttles electrons from NADH, via FMN and iron-sulfur (Fe-S) centers, to quinones in the respiratory chain. The immediate electron acceptor for the enzyme in this species is believed to be ubiquinone. Couples the redox reaction to proton translocation (for every two electrons transferred, four hydrogen ions are translocated across the cytoplasmic membrane), and thus conserves the redox energy in a proton gradient. The chain is NADH-quinone oxidoreductase subunit D from Phenylobacterium zucineum (strain HLK1).